The sequence spans 52 residues: Large ribosomal subunit protein bL33 (52 aa).

Belongs to the bacterial ribosomal protein bL33 family.

This chain is Large ribosomal subunit protein bL33, found in Helicobacter pylori (strain HPAG1).